The sequence spans 874 residues: Alanine--tRNA ligase (874 aa).

Residues His-564, His-568, Cys-665, and His-669 each coordinate Zn(2+).

It belongs to the class-II aminoacyl-tRNA synthetase family. Requires Zn(2+) as cofactor.

It localises to the cytoplasm. The enzyme catalyses tRNA(Ala) + L-alanine + ATP = L-alanyl-tRNA(Ala) + AMP + diphosphate. Functionally, catalyzes the attachment of alanine to tRNA(Ala) in a two-step reaction: alanine is first activated by ATP to form Ala-AMP and then transferred to the acceptor end of tRNA(Ala). Also edits incorrectly charged Ser-tRNA(Ala) and Gly-tRNA(Ala) via its editing domain. The protein is Alanine--tRNA ligase of Acidovorax sp. (strain JS42).